A 303-amino-acid polypeptide reads, in one-letter code: HTH-type transcriptional regulator LysG (303 aa).

The HTH lysR-type domain occupies 6 to 62 (LDGPQLAALAAVVELGSFDAAAERLHVTPSAVSQRIKSLEQQVGQVLVVREKPCRAT). The segment at residues 23–42 (FDAAAERLHVTPSAVSQRIK) is a DNA-binding region (H-T-H motif).

This sequence belongs to the LysR transcriptional regulatory family. Homodimer.

Positively regulates the expression of the exporter LysE and represses its own expression. This is HTH-type transcriptional regulator LysG from Mycobacterium bovis (strain ATCC BAA-935 / AF2122/97).